The following is a 504-amino-acid chain: tRNA (uracil-5-)-methyltransferase homolog B (504 aa).

Residues 1-16 (MAGLKRRVPLHSLRYF) constitute a mitochondrion transit peptide. S-adenosyl-L-methionine-binding residues include Gln-323, Glu-373, and Asn-423. The active-site Nucleophile is the Cys-451. Glu-497 functions as the Proton acceptor in the catalytic mechanism.

Belongs to the class I-like SAM-binding methyltransferase superfamily. RNA M5U methyltransferase family.

The protein resides in the mitochondrion. It is found in the mitochondrion matrix. The catalysed reaction is uridine(54) in tRNA + S-adenosyl-L-methionine = 5-methyluridine(54) in tRNA + S-adenosyl-L-homocysteine + H(+). The enzyme catalyses a uridine in 12S rRNA + S-adenosyl-L-methionine = a 5-methyluridine in 12S rRNA + S-adenosyl-L-homocysteine + H(+). Its function is as follows. Mitochondrial S-adenosyl-L-methionine-dependent methyltransferase that catalyzes the formation of 5-methyl-uridine in tRNAs and 12S rRNA. Catalyzes the methylation of uridine at position 54 (m5U54) in all tRNAs. Specifically methylates the uridine in position 429 of 12S rRNA (m5U429). Does not affect RNA stability or mitochondrial translation. In Homo sapiens (Human), this protein is tRNA (uracil-5-)-methyltransferase homolog B.